We begin with the raw amino-acid sequence, 177 residues long: UBA-like domain-containing protein 1 (177 aa).

Residues 89 to 177 (ESFHSGGSGS…RAHPAMEAER (89 aa)) are disordered. Positions 112–138 (PHAATSSSAASSWPTAASPPGGPQHHQ) are enriched in low complexity. A compositionally biased stretch (pro residues) spans 139–151 (PQPPLWTPTPPSP). Residues 167 to 177 (PRAHPAMEAER) show a composition bias toward basic and acidic residues.

This sequence belongs to the UBALD family.

This chain is UBA-like domain-containing protein 1 (UBALD1), found in Homo sapiens (Human).